The primary structure comprises 254 residues: 4-hydroxy-tetrahydrodipicolinate reductase (254 aa).

7–12 lines the NAD(+) pocket; the sequence is GASGRI. R35 lines the NADP(+) pocket. NAD(+) is bound by residues 91–93 and 115–118; these read GTT and AHNM. The Proton donor/acceptor role is filled by H147. H148 is a (S)-2,3,4,5-tetrahydrodipicolinate binding site. K151 functions as the Proton donor in the catalytic mechanism. 157–158 is a (S)-2,3,4,5-tetrahydrodipicolinate binding site; the sequence is GT.

The protein belongs to the DapB family.

The protein resides in the cytoplasm. The catalysed reaction is (S)-2,3,4,5-tetrahydrodipicolinate + NAD(+) + H2O = (2S,4S)-4-hydroxy-2,3,4,5-tetrahydrodipicolinate + NADH + H(+). It catalyses the reaction (S)-2,3,4,5-tetrahydrodipicolinate + NADP(+) + H2O = (2S,4S)-4-hydroxy-2,3,4,5-tetrahydrodipicolinate + NADPH + H(+). It functions in the pathway amino-acid biosynthesis; L-lysine biosynthesis via DAP pathway; (S)-tetrahydrodipicolinate from L-aspartate: step 4/4. Its function is as follows. Catalyzes the conversion of 4-hydroxy-tetrahydrodipicolinate (HTPA) to tetrahydrodipicolinate. The sequence is that of 4-hydroxy-tetrahydrodipicolinate reductase from Helicobacter acinonychis (strain Sheeba).